Reading from the N-terminus, the 407-residue chain is S-adenosylmethionine synthase (407 aa).

Histidine 21 contacts ATP. Residue aspartate 23 participates in Mg(2+) binding. K(+) is bound at residue glutamate 49. Glutamate 62 and glutamine 105 together coordinate L-methionine. The tract at residues 105-115 is flexible loop; sequence QSQEIGAGVDA. ATP contacts are provided by residues 179–181, aspartate 259, 265–266, alanine 282, and lysine 286; these read DGK and RK. Aspartate 259 contacts L-methionine. Position 290 (lysine 290) interacts with L-methionine.

Belongs to the AdoMet synthase family. In terms of assembly, homotetramer; dimer of dimers. It depends on Mg(2+) as a cofactor. K(+) serves as cofactor.

The protein resides in the cytoplasm. It catalyses the reaction L-methionine + ATP + H2O = S-adenosyl-L-methionine + phosphate + diphosphate. The protein operates within amino-acid biosynthesis; S-adenosyl-L-methionine biosynthesis; S-adenosyl-L-methionine from L-methionine: step 1/1. Its function is as follows. Catalyzes the formation of S-adenosylmethionine (AdoMet) from methionine and ATP. The overall synthetic reaction is composed of two sequential steps, AdoMet formation and the subsequent tripolyphosphate hydrolysis which occurs prior to release of AdoMet from the enzyme. This chain is S-adenosylmethionine synthase, found in Corynebacterium aurimucosum (strain ATCC 700975 / DSM 44827 / CIP 107346 / CN-1) (Corynebacterium nigricans).